Reading from the N-terminus, the 412-residue chain is Serine hydroxymethyltransferase (412 aa).

(6S)-5,6,7,8-tetrahydrofolate contacts are provided by residues Leu117 and 121–123; that span reads GHL. The residue at position 226 (Lys226) is an N6-(pyridoxal phosphate)lysine. 349-351 contacts (6S)-5,6,7,8-tetrahydrofolate; the sequence is SPF.

The protein belongs to the SHMT family. As to quaternary structure, homodimer. Pyridoxal 5'-phosphate is required as a cofactor.

It is found in the cytoplasm. It catalyses the reaction (6R)-5,10-methylene-5,6,7,8-tetrahydrofolate + glycine + H2O = (6S)-5,6,7,8-tetrahydrofolate + L-serine. The protein operates within one-carbon metabolism; tetrahydrofolate interconversion. It participates in amino-acid biosynthesis; glycine biosynthesis; glycine from L-serine: step 1/1. Functionally, catalyzes the reversible interconversion of serine and glycine with tetrahydrofolate (THF) serving as the one-carbon carrier. This reaction serves as the major source of one-carbon groups required for the biosynthesis of purines, thymidylate, methionine, and other important biomolecules. Also exhibits THF-independent aldolase activity toward beta-hydroxyamino acids, producing glycine and aldehydes, via a retro-aldol mechanism. This is Serine hydroxymethyltransferase from Geobacillus thermodenitrificans (strain NG80-2).